The primary structure comprises 125 residues: Fluoride-specific ion channel FluC (125 aa).

4 helical membrane-spanning segments follow: residues 5-25, 33-53, 66-86, and 100-120; these read IFLVGIGGGIGSVLRFVVSLL, IFPLTTFVVNLLGCFFVGILV, VKIFFITGFCGGFTTFSSFSL, and LVLYILINIIAGCAAVLLGYI. Na(+) is bound by residues Gly-76 and Thr-79.

This sequence belongs to the fluoride channel Fluc/FEX (TC 1.A.43) family.

It localises to the cell inner membrane. It carries out the reaction fluoride(in) = fluoride(out). Its activity is regulated as follows. Na(+) is not transported, but it plays an essential structural role and its presence is essential for fluoride channel function. In terms of biological role, fluoride-specific ion channel. Important for reducing fluoride concentration in the cell, thus reducing its toxicity. The chain is Fluoride-specific ion channel FluC from Azobacteroides pseudotrichonymphae genomovar. CFP2.